The chain runs to 157 residues: Large ribosomal subunit protein mL59 (157 aa).

Belongs to the mitochondrion-specific ribosomal protein mL59 family. As to quaternary structure, component of the mitochondrial large ribosomal subunit (mt-LSU). Mature yeast 74S mitochondrial ribosomes consist of a small (37S) and a large (54S) subunit. The 37S small subunit contains a 15S ribosomal RNA (15S mt-rRNA) and 34 different proteins. The 54S large subunit contains a 21S rRNA (21S mt-rRNA) and 46 different proteins.

The protein localises to the mitochondrion. In terms of biological role, component of the mitochondrial ribosome (mitoribosome), a dedicated translation machinery responsible for the synthesis of mitochondrial genome-encoded proteins, including at least some of the essential transmembrane subunits of the mitochondrial respiratory chain. The mitoribosomes are attached to the mitochondrial inner membrane and translation products are cotranslationally integrated into the membrane. In Saccharomyces cerevisiae (strain ATCC 204508 / S288c) (Baker's yeast), this protein is Large ribosomal subunit protein mL59 (MRPL25).